A 986-amino-acid chain; its full sequence is Epidermin biosynthesis protein EpiB (986 aa).

It to B.subtilis SpaB and L.lactis NisB.

The protein localises to the cell membrane. Its function is as follows. Involved in the post-translational modification of the lantibiotic epidermin. In Staphylococcus epidermidis, this protein is Epidermin biosynthesis protein EpiB (epiB).